A 305-amino-acid polypeptide reads, in one-letter code: GMP synthase [glutamine-hydrolyzing] subunit B (305 aa).

Residues 2-184 form the GMPS ATP-PPase domain; it reads VKPEKFIPKA…LQLPEEICER (183 aa). 29–35 is an ATP binding site; sequence SGGVDSS.

As to quaternary structure, heterodimer composed of a glutamine amidotransferase subunit (A) and a GMP-binding subunit (B).

It carries out the reaction XMP + L-glutamine + ATP + H2O = GMP + L-glutamate + AMP + diphosphate + 2 H(+). The protein operates within purine metabolism; GMP biosynthesis; GMP from XMP (L-Gln route): step 1/1. Functionally, catalyzes the synthesis of GMP from XMP. This is GMP synthase [glutamine-hydrolyzing] subunit B (guaAB) from Methanosarcina acetivorans (strain ATCC 35395 / DSM 2834 / JCM 12185 / C2A).